The chain runs to 389 residues: Large envelope protein (389 aa).

Polar residues-rich tracts occupy residues 1-10 (MGQNLSTSNP) and 85-95 (STNRQTGRQPT). Disordered regions lie at residues 1–54 (MGQN…AFGL) and 73–106 (ILHT…DTHP). Gly-2 carries N-myristoyl glycine; by host lipidation. Residues 2 to 108 (GQNLSTSNPL…PPLRDTHPQA (107 aa)) form a pre-S1 region. The pre-S stretch occupies residues 2–163 (GQNLSTSNPL…FSRIGDPVTN (162 aa)). Topologically, residues 2-170 (GQNLSTSNPL…VTNMENITSG (169 aa)) are virion surface; in external conformation. Topologically, residues 2–242 (GQNLSTSNPL…PGYRWMCLRG (241 aa)) are intravirion; in internal conformation. The segment at 109-163 (VQWNSTTFHQTLQDPRVRGLYFPAGGSSSGTVNPVPTTASPLSSIFSRIGDPVTN) is pre-S2. The helical transmembrane segment at 171–191 (FLGPLLVLQAGFFLLTRILTI) threads the bilayer. Residues 192–242 (PQSLDSWWTSLNFRGGTTVCLGQNSQSPTSNHSPTSCPPTCPGYRWMCLRG) lie on the Intravirion; in external conformation side of the membrane. The helical transmembrane segment at 243-263 (FIIFLFILLLCLIFLLVLLEY) threads the bilayer. Over 264-337 (QGMLHVCPLI…WASVRFSWLS (74 aa)) the chain is Virion surface. An N-linked (GlcNAc...) asparagine; by host glycan is attached at Asn-309. A helical membrane pass occupies residues 338–358 (LLVPFVQWFVGLSPTVWLSAI). Topologically, residues 359–364 (WMMWYW) are intravirion. A helical transmembrane segment spans residues 365-387 (GPSLYSILSPFLPLLPIFFCLWV). Residues 388–389 (YI) are Virion surface-facing.

The protein belongs to the orthohepadnavirus major surface antigen family. In terms of assembly, li-HBsAg interacts with capsid protein and with HDV Large delta antigen. Isoform M associates with host chaperone CANX through its pre-S2 N glycan. This association may be essential for M proper secretion. Post-translationally, isoform M is N-terminally acetylated by host at a ratio of 90%, and N-glycosylated by host at the pre-S2 region. Myristoylated.

The protein resides in the virion membrane. Functionally, the large envelope protein exists in two topological conformations, one which is termed 'external' or Le-HBsAg and the other 'internal' or Li-HBsAg. In its external conformation the protein attaches the virus to cell receptors and thereby initiating infection. This interaction determines the species specificity and liver tropism. This attachment induces virion internalization predominantly through caveolin-mediated endocytosis. The large envelope protein also assures fusion between virion membrane and endosomal membrane. In its internal conformation the protein plays a role in virion morphogenesis and mediates the contact with the nucleocapsid like a matrix protein. In terms of biological role, the middle envelope protein plays an important role in the budding of the virion. It is involved in the induction of budding in a nucleocapsid independent way. In this process the majority of envelope proteins bud to form subviral lipoprotein particles of 22 nm of diameter that do not contain a nucleocapsid. This is Large envelope protein from Homo sapiens (Human).